We begin with the raw amino-acid sequence, 340 residues long: Glycerol-3-phosphate dehydrogenase [NAD(P)+] (340 aa).

Residues S12, W13, K34, and K107 each coordinate NADPH. Positions 107, 138, and 140 each coordinate sn-glycerol 3-phosphate. A142 contacts NADPH. The sn-glycerol 3-phosphate site is built by K193, D246, S256, R257, and N258. K193 acts as the Proton acceptor in catalysis. An NADPH-binding site is contributed by R257. NADPH-binding residues include I281 and E283.

Belongs to the NAD-dependent glycerol-3-phosphate dehydrogenase family.

The protein resides in the cytoplasm. The catalysed reaction is sn-glycerol 3-phosphate + NAD(+) = dihydroxyacetone phosphate + NADH + H(+). It carries out the reaction sn-glycerol 3-phosphate + NADP(+) = dihydroxyacetone phosphate + NADPH + H(+). The protein operates within membrane lipid metabolism; glycerophospholipid metabolism. In terms of biological role, catalyzes the reduction of the glycolytic intermediate dihydroxyacetone phosphate (DHAP) to sn-glycerol 3-phosphate (G3P), the key precursor for phospholipid synthesis. The sequence is that of Glycerol-3-phosphate dehydrogenase [NAD(P)+] from Enterococcus faecalis (strain ATCC 700802 / V583).